The following is a 102-amino-acid chain: ATP-dependent Clp protease adapter protein ClpS (102 aa).

Belongs to the ClpS family. As to quaternary structure, binds to the N-terminal domain of the chaperone ClpA.

Functionally, involved in the modulation of the specificity of the ClpAP-mediated ATP-dependent protein degradation. The protein is ATP-dependent Clp protease adapter protein ClpS of Janthinobacterium sp. (strain Marseille) (Minibacterium massiliensis).